Here is a 1160-residue protein sequence, read N- to C-terminus: DNA polymerase III subunit alpha (1160 aa).

It belongs to the DNA polymerase type-C family. DnaE subfamily. The DNA polymerase III holoenzyme complex contains at least 10 different subunits organized into 3 functionally essential subassemblies: the Pol III core, the beta sliding clamp processivity factor and the clamp-loading complex. The Pol III core (subunits alpha, epsilon and theta) contains the polymerase and the 3'-5' exonuclease proofreading activities. The polymerase is tethered to the template via the dimeric beta sliding clamp processivity factor. The clamp loader (also called gamma complex) assembles the beta sliding clamp onto the primed template and plays a central role in the organization and communication at the replication fork. The clamp-loading complex contains delta, delta', psi and chi, and 3 copies of either or both of two different DnaX proteins, gamma and tau. The DNA replisome complex has a single clamp loader (3 tau and 1 each of delta, delta', psi and chi subunits) which binds 3 Pol III cores (1 core on the leading strand and 2 on the lagging strand) each with a beta sliding clamp dimer. Additional proteins in the replisome are other copies of gamma, psi and chi, Ssb, DNA helicase and RNA primase. Interacts with the beta sliding-clamp subunit via the peptide Gln-Ala-Asp-Met-Phe (residues 920-924).

It localises to the cytoplasm. The enzyme catalyses DNA(n) + a 2'-deoxyribonucleoside 5'-triphosphate = DNA(n+1) + diphosphate. DNA polymerase III is a complex, multichain enzyme responsible for most of the replicative synthesis in bacteria. This DNA polymerase also exhibits 3' to 5' exonuclease activity. The alpha chain is the DNA polymerase catalytic subunit. It is tethered to replicating DNA by the beta sliding clamp (dnaN), which confers extremely high processivity to the catalytic subunit, copying a 5.4 kb genome in 11 seconds, a speed of at least 500 nucleotides/second at 30 degrees Celsius. This chain is DNA polymerase III subunit alpha (dnaE), found in Escherichia coli (strain K12).